A 128-amino-acid chain; its full sequence is MALSKEELIEAIENMTVLELSELVKALEERFGVSATAVAAAPAAAGAAGAEAAAAEEEKTEFDVILQDAGAKKIQVIKEVRAATGLGLKEAKALVDEAPNPVKEGLPKEEAEALKAKLEEAGATVELK.

This sequence belongs to the bacterial ribosomal protein bL12 family. Homodimer. Part of the ribosomal stalk of the 50S ribosomal subunit. Forms a multimeric L10(L12)X complex, where L10 forms an elongated spine to which 2 to 4 L12 dimers bind in a sequential fashion. Binds GTP-bound translation factors.

Its function is as follows. Forms part of the ribosomal stalk which helps the ribosome interact with GTP-bound translation factors. Is thus essential for accurate translation. The sequence is that of Large ribosomal subunit protein bL12 from Rubrobacter xylanophilus (strain DSM 9941 / JCM 11954 / NBRC 16129 / PRD-1).